The following is a 92-amino-acid chain: MADERAPQRSTSGPRKKRPFQRRKVCRFCADKQVTIDYKDPRTLRYFVSERGKIIPRRISGNCSKHQREITEAIKRARNIALLPIAGSHATA.

The disordered stretch occupies residues 1 to 22 (MADERAPQRSTSGPRKKRPFQR).

The protein belongs to the bacterial ribosomal protein bS18 family. As to quaternary structure, part of the 30S ribosomal subunit. Forms a tight heterodimer with protein bS6.

Its function is as follows. Binds as a heterodimer with protein bS6 to the central domain of the 16S rRNA, where it helps stabilize the platform of the 30S subunit. The protein is Small ribosomal subunit protein bS18 of Citrifermentans bemidjiense (strain ATCC BAA-1014 / DSM 16622 / JCM 12645 / Bem) (Geobacter bemidjiensis).